We begin with the raw amino-acid sequence, 153 residues long: 6,7-dimethyl-8-ribityllumazine synthase (153 aa).

5-amino-6-(D-ribitylamino)uracil contacts are provided by residues Trp22, 56–58 (SYE), and 80–82 (AVI). 85–86 (AT) provides a ligand contact to (2S)-2-hydroxy-3-oxobutyl phosphate. The active-site Proton donor is His88. Leu113 serves as a coordination point for 5-amino-6-(D-ribitylamino)uracil. Arg127 contacts (2S)-2-hydroxy-3-oxobutyl phosphate.

Belongs to the DMRL synthase family.

The catalysed reaction is (2S)-2-hydroxy-3-oxobutyl phosphate + 5-amino-6-(D-ribitylamino)uracil = 6,7-dimethyl-8-(1-D-ribityl)lumazine + phosphate + 2 H2O + H(+). Its pathway is cofactor biosynthesis; riboflavin biosynthesis; riboflavin from 2-hydroxy-3-oxobutyl phosphate and 5-amino-6-(D-ribitylamino)uracil: step 1/2. In terms of biological role, catalyzes the formation of 6,7-dimethyl-8-ribityllumazine by condensation of 5-amino-6-(D-ribitylamino)uracil with 3,4-dihydroxy-2-butanone 4-phosphate. This is the penultimate step in the biosynthesis of riboflavin. In Herpetosiphon aurantiacus (strain ATCC 23779 / DSM 785 / 114-95), this protein is 6,7-dimethyl-8-ribityllumazine synthase.